The following is a 535-amino-acid chain: Succinate-semialdehyde dehydrogenase, mitochondrial (535 aa).

The N-terminal 47 residues, 1–47 (MATCIWLRSCGARRLGSTFPGCRLRPRAGGLVPASGPAPGPAQLRCY), are a transit peptide targeting the mitochondrion. Lysine 126 is subject to N6-acetyllysine; alternate. Lysine 126 bears the N6-succinyllysine; alternate mark. N6-succinyllysine is present on residues lysine 135 and lysine 184. 202–204 (TPW) lines the NAD(+) pocket. Arginine 213 provides a ligand contact to substrate. Residue 228 to 231 (KPAE) coordinates NAD(+). The residue at position 265 (lysine 265) is an N6-acetyllysine; alternate. Lysine 265 bears the N6-succinyllysine; alternate mark. Residues 284–289 (GSTTTG) and glutamate 306 each bind NAD(+). The active-site Proton acceptor is the glutamate 306. A substrate-binding site is contributed by arginine 334. Cysteine 340 serves as the catalytic Nucleophile. A disulfide bond links cysteine 340 and cysteine 342. An N6-acetyllysine modification is found at lysine 365. Lysine 402 carries the post-translational modification N6-succinyllysine. Lysine 411 carries the post-translational modification N6-acetyllysine. An NAD(+)-binding site is contributed by 438–440 (ETF). Serine 498 lines the substrate pocket. At serine 499 the chain carries Phosphoserine.

This sequence belongs to the aldehyde dehydrogenase family. As to quaternary structure, homotetramer. Brain, pancreas, heart, liver, skeletal muscle and kidney. Lower in placenta.

It localises to the mitochondrion. It carries out the reaction succinate semialdehyde + NAD(+) + H2O = succinate + NADH + 2 H(+). It participates in amino-acid degradation; 4-aminobutanoate degradation. With respect to regulation, redox-regulated. Inhibited under oxydizing conditions. Inhibited by hydrogen peroxide H(2)O(2). In terms of biological role, catalyzes one step in the degradation of the inhibitory neurotransmitter gamma-aminobutyric acid (GABA). The polypeptide is Succinate-semialdehyde dehydrogenase, mitochondrial (Homo sapiens (Human)).